The sequence spans 367 residues: tRNA (guanine(26)-N(2))-dimethyltransferase (367 aa).

Positions 1-365 constitute a Trm1 methyltransferase domain; the sequence is MRVSEGRVTV…ADVVEIREAT (365 aa). Positions 34, 64, 79, 105, and 106 each coordinate S-adenosyl-L-methionine. Zn(2+) is bound by residues C234, C237, C254, and C257.

This sequence belongs to the class I-like SAM-binding methyltransferase superfamily. Trm1 family.

The enzyme catalyses guanosine(26) in tRNA + 2 S-adenosyl-L-methionine = N(2)-dimethylguanosine(26) in tRNA + 2 S-adenosyl-L-homocysteine + 2 H(+). Functionally, dimethylates a single guanine residue at position 26 of a number of tRNAs using S-adenosyl-L-methionine as donor of the methyl groups. The polypeptide is tRNA (guanine(26)-N(2))-dimethyltransferase (Haloarcula marismortui (strain ATCC 43049 / DSM 3752 / JCM 8966 / VKM B-1809) (Halobacterium marismortui)).